A 682-amino-acid chain; its full sequence is Potassium-transporting ATPase ATP-binding subunit (682 aa).

4 consecutive transmembrane segments (helical) span residues 34-54 (PVMF…IAMA), 62-82 (ALFS…ANFA), 219-239 (IALT…TATL), and 254-274 (VLVA…LSAI). The 4-aspartylphosphate intermediate role is filled by Asp-307. ATP is bound by residues Asp-344, Glu-348, 377 to 384 (FTAQSRMS), and Lys-395. The Mg(2+) site is built by Asp-518 and Asp-522. The next 3 membrane-spanning stretches (helical) occupy residues 588–608 (FAII…LNIM), 616–636 (AILS…PLAL), and 656–676 (IYGL…DLLL).

The protein belongs to the cation transport ATPase (P-type) (TC 3.A.3) family. Type IA subfamily. As to quaternary structure, the system is composed of three essential subunits: KdpA, KdpB and KdpC.

Its subcellular location is the cell inner membrane. The catalysed reaction is K(+)(out) + ATP + H2O = K(+)(in) + ADP + phosphate + H(+). Part of the high-affinity ATP-driven potassium transport (or Kdp) system, which catalyzes the hydrolysis of ATP coupled with the electrogenic transport of potassium into the cytoplasm. This subunit is responsible for energy coupling to the transport system and for the release of the potassium ions to the cytoplasm. This chain is Potassium-transporting ATPase ATP-binding subunit, found in Shigella boydii serotype 18 (strain CDC 3083-94 / BS512).